Consider the following 235-residue polypeptide: Phosphoribosylaminoimidazole-succinocarboxamide synthase (235 aa).

Belongs to the SAICAR synthetase family.

It catalyses the reaction 5-amino-1-(5-phospho-D-ribosyl)imidazole-4-carboxylate + L-aspartate + ATP = (2S)-2-[5-amino-1-(5-phospho-beta-D-ribosyl)imidazole-4-carboxamido]succinate + ADP + phosphate + 2 H(+). It functions in the pathway purine metabolism; IMP biosynthesis via de novo pathway; 5-amino-1-(5-phospho-D-ribosyl)imidazole-4-carboxamide from 5-amino-1-(5-phospho-D-ribosyl)imidazole-4-carboxylate: step 1/2. This Streptococcus pneumoniae serotype 4 (strain ATCC BAA-334 / TIGR4) protein is Phosphoribosylaminoimidazole-succinocarboxamide synthase (purC).